The following is a 207-amino-acid chain: Thiamine-phosphate synthase (207 aa).

Residues 36-40 and N68 each bind 4-amino-2-methyl-5-(diphosphooxymethyl)pyrimidine; that span reads QLRLK. Residues D69 and D88 each coordinate Mg(2+). T107 serves as a coordination point for 4-amino-2-methyl-5-(diphosphooxymethyl)pyrimidine. Residue 134–136 participates in 2-[(2R,5Z)-2-carboxy-4-methylthiazol-5(2H)-ylidene]ethyl phosphate binding; sequence TGT. K137 serves as a coordination point for 4-amino-2-methyl-5-(diphosphooxymethyl)pyrimidine. G164 is a 2-[(2R,5Z)-2-carboxy-4-methylthiazol-5(2H)-ylidene]ethyl phosphate binding site.

This sequence belongs to the thiamine-phosphate synthase family. Mg(2+) is required as a cofactor.

It carries out the reaction 2-[(2R,5Z)-2-carboxy-4-methylthiazol-5(2H)-ylidene]ethyl phosphate + 4-amino-2-methyl-5-(diphosphooxymethyl)pyrimidine + 2 H(+) = thiamine phosphate + CO2 + diphosphate. It catalyses the reaction 2-(2-carboxy-4-methylthiazol-5-yl)ethyl phosphate + 4-amino-2-methyl-5-(diphosphooxymethyl)pyrimidine + 2 H(+) = thiamine phosphate + CO2 + diphosphate. The enzyme catalyses 4-methyl-5-(2-phosphooxyethyl)-thiazole + 4-amino-2-methyl-5-(diphosphooxymethyl)pyrimidine + H(+) = thiamine phosphate + diphosphate. The protein operates within cofactor biosynthesis; thiamine diphosphate biosynthesis; thiamine phosphate from 4-amino-2-methyl-5-diphosphomethylpyrimidine and 4-methyl-5-(2-phosphoethyl)-thiazole: step 1/1. Condenses 4-methyl-5-(beta-hydroxyethyl)thiazole monophosphate (THZ-P) and 2-methyl-4-amino-5-hydroxymethyl pyrimidine pyrophosphate (HMP-PP) to form thiamine monophosphate (TMP). The sequence is that of Thiamine-phosphate synthase from Rhodospirillum centenum (strain ATCC 51521 / SW).